The sequence spans 278 residues: Elongation factor Ts (278 aa).

The interval 79–82 (TDFV) is involved in Mg(2+) ion dislocation from EF-Tu.

It belongs to the EF-Ts family.

Its subcellular location is the cytoplasm. Associates with the EF-Tu.GDP complex and induces the exchange of GDP to GTP. It remains bound to the aminoacyl-tRNA.EF-Tu.GTP complex up to the GTP hydrolysis stage on the ribosome. This chain is Elongation factor Ts, found in Borrelia recurrentis (strain A1).